Here is a 476-residue protein sequence, read N- to C-terminus: BTB/POZ domain-containing protein KCTD8 (476 aa).

The 79-residue stretch at 44-122 (EVVELNVGGQ…LRDKQLALPE (79 aa)) folds into the BTB domain. At Ser-78 the chain carries Phosphoserine. Arg-80 is subject to Omega-N-methylarginine. Residues 331–412 (SPKQEHEDRK…WMPPPDKRRN (82 aa)) are disordered. The span at 333–349 (KQEHEDRKRDKVTDKGS) shows a compositional bias: basic and acidic residues. Residues 350-391 (ESGTSCNELSTSSCDSHSEASTPQDNPANTQQAAAHQPNTLT) are compositionally biased toward polar residues. Residue Ser-413 is modified to Phosphoserine.

In terms of assembly, interacts as a tetramer with GABBR1 and GABBR2.

The protein resides in the presynaptic cell membrane. Its subcellular location is the postsynaptic cell membrane. Its function is as follows. Auxiliary subunit of GABA-B receptors that determine the pharmacology and kinetics of the receptor response. Increases agonist potency and markedly alter the G-protein signaling of the receptors by accelerating onset and promoting desensitization. The polypeptide is BTB/POZ domain-containing protein KCTD8 (Kctd8) (Mus musculus (Mouse)).